The chain runs to 97 residues: Large ribosomal subunit protein uL23 (97 aa).

This sequence belongs to the universal ribosomal protein uL23 family. As to quaternary structure, part of the 50S ribosomal subunit. Contacts protein L29, and trigger factor when it is bound to the ribosome.

One of the early assembly proteins it binds 23S rRNA. One of the proteins that surrounds the polypeptide exit tunnel on the outside of the ribosome. Forms the main docking site for trigger factor binding to the ribosome. The protein is Large ribosomal subunit protein uL23 of Brachyspira hyodysenteriae (strain ATCC 49526 / WA1).